A 77-amino-acid chain; its full sequence is Sec-independent protein translocase protein TatA (77 aa).

A helical membrane pass occupies residues 1–21 (MGSLSIWHWIVVIAVVLLLFG). A compositionally biased stretch (basic and acidic residues) spans 43 to 60 (MQDDDKAPEKTEPVKSID). Residues 43-77 (MQDDDKAPEKTEPVKSIDHGATPSATRTDVGSKAV) form a disordered region.

The protein belongs to the TatA/E family. The Tat system comprises two distinct complexes: a TatABC complex, containing multiple copies of TatA, TatB and TatC subunits, and a separate TatA complex, containing only TatA subunits. Substrates initially bind to the TatABC complex, which probably triggers association of the separate TatA complex to form the active translocon.

The protein resides in the cell inner membrane. In terms of biological role, part of the twin-arginine translocation (Tat) system that transports large folded proteins containing a characteristic twin-arginine motif in their signal peptide across membranes. TatA could form the protein-conducting channel of the Tat system. The sequence is that of Sec-independent protein translocase protein TatA from Bradyrhizobium sp. (strain BTAi1 / ATCC BAA-1182).